We begin with the raw amino-acid sequence, 519 residues long: Putative cytochrome P450 CYP13A1 (519 aa).

C465 contacts heme.

Belongs to the cytochrome P450 family. Heme serves as cofactor.

Cytochromes P450 are a group of heme-thiolate monooxygenases. They oxidize a variety of structurally unrelated compounds, including steroids, fatty acids, and xenobiotics. This Caenorhabditis elegans protein is Putative cytochrome P450 CYP13A1 (cyp-13A1).